A 614-amino-acid polypeptide reads, in one-letter code: DNA mismatch repair protein MutL (614 aa).

It belongs to the DNA mismatch repair MutL/HexB family.

This protein is involved in the repair of mismatches in DNA. It is required for dam-dependent methyl-directed DNA mismatch repair. May act as a 'molecular matchmaker', a protein that promotes the formation of a stable complex between two or more DNA-binding proteins in an ATP-dependent manner without itself being part of a final effector complex. The protein is DNA mismatch repair protein MutL of Leptospira biflexa serovar Patoc (strain Patoc 1 / ATCC 23582 / Paris).